The sequence spans 205 residues: Peptidyl-prolyl cis-trans isomerase B (205 aa).

The first 20 residues, 1–20 (MKFSGLWCWLLLFLSVNVIA), serve as a signal peptide directing secretion. The PPIase cyclophilin-type domain occupies 39–198 (FFDIEHGEEK…EAVKIAKCGE (160 aa)).

This sequence belongs to the cyclophilin-type PPIase family. PPIase B subfamily.

It localises to the secreted. The enzyme catalyses [protein]-peptidylproline (omega=180) = [protein]-peptidylproline (omega=0). Cyclosporin A (CsA) inhibits CYPB. PPIases accelerate the folding of proteins. It catalyzes the cis-trans isomerization of proline imidic peptide bonds in oligopeptides. The polypeptide is Peptidyl-prolyl cis-trans isomerase B (CPR2) (Saccharomyces cerevisiae (strain ATCC 204508 / S288c) (Baker's yeast)).